Consider the following 388-residue polypeptide: Na(+)/H(+) antiporter NhaA (388 aa).

Transmembrane regions (helical) follow at residues 14-34, 59-79, 95-115, 125-145, 154-174, 179-199, 219-239, 254-274, 287-307, 328-348, and 356-376; these read GGII…SGFT, MLLW…GLEV, AFPV…YLAF, GWAI…ALLG, IFLM…IALF, LSMV…VLNL, VLKS…FIPL, VLHP…NAGV, ILPL…ISLF, IMAV…IASL, and ALIN…AVIG.

The protein belongs to the NhaA Na(+)/H(+) (TC 2.A.33) antiporter family.

The protein resides in the cell inner membrane. The enzyme catalyses Na(+)(in) + 2 H(+)(out) = Na(+)(out) + 2 H(+)(in). Functionally, na(+)/H(+) antiporter that extrudes sodium in exchange for external protons. The protein is Na(+)/H(+) antiporter NhaA of Citrobacter koseri (strain ATCC BAA-895 / CDC 4225-83 / SGSC4696).